The chain runs to 671 residues: Archaeal Rqc2 homolog aRqcH (671 aa).

Coiled coils occupy residues 291–363 (KVVV…ARIK) and 410–465 (RKNA…MQMK).

It belongs to the NEMF family. Associates with stalled 50S ribosomal subunits.

Probably part of the ribosome quality control system (RQC). May mediate the addition of alanine residues (Ala tailing) to incompletely synthesized nascent chains from stalled ribosomes, leading to their degradation. This Methanocaldococcus jannaschii (strain ATCC 43067 / DSM 2661 / JAL-1 / JCM 10045 / NBRC 100440) (Methanococcus jannaschii) protein is Archaeal Rqc2 homolog aRqcH.